The sequence spans 273 residues: Putative pyruvate, phosphate dikinase regulatory protein (273 aa).

Residue glycine 149 to threonine 156 coordinates ADP.

The protein belongs to the pyruvate, phosphate/water dikinase regulatory protein family. PDRP subfamily.

It carries out the reaction N(tele)-phospho-L-histidyl/L-threonyl-[pyruvate, phosphate dikinase] + ADP = N(tele)-phospho-L-histidyl/O-phospho-L-threonyl-[pyruvate, phosphate dikinase] + AMP + H(+). The catalysed reaction is N(tele)-phospho-L-histidyl/O-phospho-L-threonyl-[pyruvate, phosphate dikinase] + phosphate + H(+) = N(tele)-phospho-L-histidyl/L-threonyl-[pyruvate, phosphate dikinase] + diphosphate. In terms of biological role, bifunctional serine/threonine kinase and phosphorylase involved in the regulation of the pyruvate, phosphate dikinase (PPDK) by catalyzing its phosphorylation/dephosphorylation. The protein is Putative pyruvate, phosphate dikinase regulatory protein of Rickettsia canadensis (strain McKiel).